Here is a 142-residue protein sequence, read N- to C-terminus: Galactose-6-phosphate isomerase subunit LacA (142 aa).

This sequence belongs to the LacAB/RpiB family. In terms of assembly, heteromultimeric protein consisting of LacA and LacB.

It carries out the reaction aldehydo-D-galactose 6-phosphate = keto-D-tagatose 6-phosphate. The protein operates within carbohydrate metabolism; D-galactose 6-phosphate degradation; D-tagatose 6-phosphate from D-galactose 6-phosphate: step 1/1. The sequence is that of Galactose-6-phosphate isomerase subunit LacA from Staphylococcus epidermidis (strain ATCC 35984 / DSM 28319 / BCRC 17069 / CCUG 31568 / BM 3577 / RP62A).